The sequence spans 204 residues: Probable chorismate pyruvate-lyase (204 aa).

Positions 75, 113, and 160 each coordinate substrate.

This sequence belongs to the UbiC family.

Its subcellular location is the cytoplasm. It catalyses the reaction chorismate = 4-hydroxybenzoate + pyruvate. Its pathway is cofactor biosynthesis; ubiquinone biosynthesis. Removes the pyruvyl group from chorismate, with concomitant aromatization of the ring, to provide 4-hydroxybenzoate (4HB) for the ubiquinone pathway. The chain is Probable chorismate pyruvate-lyase from Alcanivorax borkumensis (strain ATCC 700651 / DSM 11573 / NCIMB 13689 / SK2).